Consider the following 422-residue polypeptide: Metallocarboxypeptidase A (422 aa).

The signal sequence occupies residues 1 to 17 (MRSVLSLALLAANVVTA). The propeptide at 18–112 (AVVSPFDYSG…FEAYSAGYAP (95 aa)) is activation peptide. Residues 119–419 (SYHSYQDHLS…AGTVAMLKAV (301 aa)) form the Peptidase M14 domain. Positions 179 and 182 each coordinate Zn(2+). Residues 179 to 182 (HARE), arginine 237, and 254 to 255 (NR) each bind substrate. Cysteine 248 and cysteine 271 are disulfide-bonded. Histidine 309 contributes to the Zn(2+) binding site. 310 to 311 (SY) contacts substrate. The active-site Proton donor/acceptor is glutamate 385.

It belongs to the peptidase M14 family. It depends on Zn(2+) as a cofactor.

It is found in the secreted. Functionally, extracellular metalloprotease that contributes to pathogenicity. In Trichophyton rubrum (Athlete's foot fungus), this protein is Metallocarboxypeptidase A (MCPA).